A 325-amino-acid chain; its full sequence is Glycerol-3-phosphate dehydrogenase [NAD(P)+] (325 aa).

NADPH-binding residues include S14, F15, R35, and K109. Sn-glycerol 3-phosphate is bound by residues K109 and G137. Residue A141 coordinates NADPH. Sn-glycerol 3-phosphate is bound by residues K192, D247, S257, R258, and N259. The active-site Proton acceptor is K192. R258 is an NADPH binding site. NADPH-binding residues include L282 and E284.

It belongs to the NAD-dependent glycerol-3-phosphate dehydrogenase family.

It is found in the cytoplasm. It carries out the reaction sn-glycerol 3-phosphate + NAD(+) = dihydroxyacetone phosphate + NADH + H(+). The catalysed reaction is sn-glycerol 3-phosphate + NADP(+) = dihydroxyacetone phosphate + NADPH + H(+). Its pathway is membrane lipid metabolism; glycerophospholipid metabolism. Functionally, catalyzes the reduction of the glycolytic intermediate dihydroxyacetone phosphate (DHAP) to sn-glycerol 3-phosphate (G3P), the key precursor for phospholipid synthesis. In Rickettsia africae (strain ESF-5), this protein is Glycerol-3-phosphate dehydrogenase [NAD(P)+].